We begin with the raw amino-acid sequence, 294 residues long: 4-diphosphocytidyl-2-C-methyl-D-erythritol kinase (294 aa).

Lysine 15 is an active-site residue. Residue 101-111 (PSEAGLGGGSS) coordinates ATP. Aspartate 143 is an active-site residue.

Belongs to the GHMP kinase family. IspE subfamily.

The enzyme catalyses 4-CDP-2-C-methyl-D-erythritol + ATP = 4-CDP-2-C-methyl-D-erythritol 2-phosphate + ADP + H(+). It functions in the pathway isoprenoid biosynthesis; isopentenyl diphosphate biosynthesis via DXP pathway; isopentenyl diphosphate from 1-deoxy-D-xylulose 5-phosphate: step 3/6. Its function is as follows. Catalyzes the phosphorylation of the position 2 hydroxy group of 4-diphosphocytidyl-2C-methyl-D-erythritol. The sequence is that of 4-diphosphocytidyl-2-C-methyl-D-erythritol kinase from Fusobacterium nucleatum subsp. nucleatum (strain ATCC 25586 / DSM 15643 / BCRC 10681 / CIP 101130 / JCM 8532 / KCTC 2640 / LMG 13131 / VPI 4355).